An 84-amino-acid chain; its full sequence is MARRCEICNKGVVAGVQYSHSHRQSKRTWAPNIKKVKAIVKGTPKTVHVCTRCLRSEKFKELYKKSLAKMQFNNCIFILHKNKG.

Belongs to the bacterial ribosomal protein bL28 family.

The polypeptide is Large ribosomal subunit protein bL28 (Clostridium perfringens (strain 13 / Type A)).